The chain runs to 388 residues: FBD-associated F-box protein At5g60610 (388 aa).

Positions 1–47 constitute an F-box domain; sequence MDRISGLPDELLVKIISFVPTKVAVSTSILSKRWESLWKWVPKLECD. In terms of domain architecture, FBD spans 337-388; the sequence is NWKNIQRSVPKCLKSSLKTLEFAGYTARPEERDFLSFIFKKARCLKTSSISH.

The protein is FBD-associated F-box protein At5g60610 of Arabidopsis thaliana (Mouse-ear cress).